The primary structure comprises 482 residues: Lipoamide acyltransferase component of branched-chain alpha-keto acid dehydrogenase complex, mitochondrial (482 aa).

The N-terminal 61 residues, 1–61, are a transit peptide targeting the mitochondrion; that stretch reads MAAALVLRTW…QWLKTTAALQ (61 aa). A Lipoyl-binding domain is found at 64 to 139; it reads IVQFKLSDIG…YVGKPLVDIE (76 aa). Residue Lys-105 is modified to N6-lipoyllysine. Lys-133 bears the N6-succinyllysine mark. The tract at residues 145–160 is critical for association with PPM1K; it reads DSEEDVVETPAVSHDE. A disordered region spans residues 146–171; it reads SEEDVVETPAVSHDEHTHQEIKGQKT. The segment covering 157-168 has biased composition (basic and acidic residues); it reads SHDEHTHQEIKG. A Peripheral subunit-binding (PSBD) domain is found at 172–209; sequence LATPAVRRLAMENNIKLSEVIGSGKDGRILKEDILNYL. Residue Lys-196 is modified to N6-acetyllysine; alternate. An N6-succinyllysine; alternate modification is found at Lys-196. An N6-acetyllysine modification is found at Lys-202. Over residues 218–230 the composition is skewed to pro residues; it reads PPSPKAEIMPPPP. A disordered region spans residues 218–238; the sequence is PPSPKAEIMPPPPKPKDRTIP. Ser-220 is modified (phosphoserine). An N6-acetyllysine mark is found at Lys-243 and Lys-250. Residue Lys-261 is modified to N6-succinyllysine. Lys-289 is modified (N6-acetyllysine; alternate). Lys-289 bears the N6-succinyllysine; alternate mark. Arg-291 contributes to the CoA binding site. N6-acetyllysine occurs at positions 295 and 304. CoA-binding residues include Ser-306, Asp-349, Gln-378, Ser-399, Asn-400, Ser-403, Gly-424, and Ile-426. Lys-435 is modified (N6-acetyllysine). N6-acetyllysine; alternate is present on Lys-440. Lys-440 bears the N6-succinyllysine; alternate mark. Active-site residues include His-452 and Asp-456.

The protein belongs to the 2-oxoacid dehydrogenase family. As to quaternary structure, forms a 24-polypeptide structural core with octahedral symmetry that represents the E2 component of the branched-chain alpha-ketoacid dehydrogenase (BCKDH) complex. The BCKDH complex is composed of three major building blocks E1, E2 and E3. It is organized around E2, a 24-meric cubic core composed of DBT, to which are associated 6 to 12 copies of E1, and approximately 6 copies of the dehydrogenase E3, a DLD dimer. Interacts with PPM1K with a 24:1 stoichiometry; the N-terminal region (residues 49-61) of PPM1K and C-terminal linker of the lipoyl domain of DBT/E2 (residues 145-160) are critical for this interaction whereas the lipoyl prosthetic group is dispensable. This interaction requires colocalization in mitochondria. PPM1K competes with BCKDK for binding to DBT; this interaction is modulated by branched-chain alpha-keto acids (BCKAs). At steady state, BCKDH holoenzyme preferentially binds BCKDK and BCKDHA is phosphorylated. In response to high levels of BCKAs, BCKDK is replaced by PPM1K leading to BCKDHA dephosphorylation. It depends on (R)-lipoate as a cofactor. In terms of tissue distribution, expressed in kidney (at protein level).

The protein resides in the mitochondrion matrix. It catalyses the reaction N(6)-[(R)-dihydrolipoyl]-L-lysyl-[protein] + 2-methylpropanoyl-CoA = N(6)-[(R)-S(8)-2-methylpropanoyldihydrolipoyl]-L-lysyl-[protein] + CoA. In terms of biological role, the branched-chain alpha-keto dehydrogenase complex catalyzes the overall conversion of alpha-keto acids to acyl-CoA and CO(2). It contains multiple copies of three enzymatic components: branched-chain alpha-keto acid decarboxylase (E1), lipoamide acyltransferase (E2) and lipoamide dehydrogenase (E3). Within this complex, the catalytic function of this enzyme is to accept, and to transfer to coenzyme A, acyl groups that are generated by the branched-chain alpha-keto acid decarboxylase component. The chain is Lipoamide acyltransferase component of branched-chain alpha-keto acid dehydrogenase complex, mitochondrial (DBT) from Bos taurus (Bovine).